We begin with the raw amino-acid sequence, 503 residues long: Cobyric acid synthase (503 aa).

In terms of domain architecture, GATase cobBQ-type spans 251–450 (DLDIAVIRLP…IHGIFENAAF (200 aa)). Residue cysteine 331 is the Nucleophile of the active site. The active site involves histidine 442.

Belongs to the CobB/CobQ family. CobQ subfamily.

It participates in cofactor biosynthesis; adenosylcobalamin biosynthesis. Functionally, catalyzes amidations at positions B, D, E, and G on adenosylcobyrinic A,C-diamide. NH(2) groups are provided by glutamine, and one molecule of ATP is hydrogenolyzed for each amidation. This Dehalococcoides mccartyi (strain CBDB1) protein is Cobyric acid synthase.